The sequence spans 615 residues: Probable ATP-citrate synthase subunit 1 (615 aa).

ATP contacts are provided by residues 221-241 (LIRF…EVGG) and 272-298 (FKTE…KNQA). Mg(2+) is bound at residue glutamate 238. The active-site Tele-phosphohistidine intermediate is the histidine 280. CoA is bound at residue 299–309 (MREAGIYVPET). Serine 359 carries the post-translational modification Phosphoserine.

This sequence belongs to the succinate/malate CoA ligase alpha subunit family. Composed of two subunits.

The protein localises to the cytoplasm. The enzyme catalyses oxaloacetate + acetyl-CoA + ADP + phosphate = citrate + ATP + CoA. Functionally, catalyzes the formation of cytosolic acetyl-CoA, which is mainly used for the biosynthesis of fatty acids and sterols. This Schizosaccharomyces pombe (strain 972 / ATCC 24843) (Fission yeast) protein is Probable ATP-citrate synthase subunit 1.